The following is a 141-amino-acid chain: Deoxyuridine 5'-triphosphate nucleotidohydrolase (141 aa).

Belongs to the dUTPase family. The cofactor is Mg(2+).

It catalyses the reaction dUTP + H2O = dUMP + diphosphate + H(+). It participates in pyrimidine metabolism; dUMP biosynthesis; dUMP from dCTP (dUTP route): step 2/2. In terms of biological role, this enzyme is involved in nucleotide metabolism: it produces dUMP, the immediate precursor of thymidine nucleotides and it decreases the intracellular concentration of dUTP so that uracil cannot be incorporated into DNA. The sequence is that of Deoxyuridine 5'-triphosphate nucleotidohydrolase from Chlorella (PBCV-1).